The primary structure comprises 339 residues: WAT1-related protein At5g40210 (339 aa).

10 helical membrane passes run 11–31 (GWIL…NTLV), 42–62 (FVVL…LTFF), 74–94 (FSIL…QILG), 104–124 (TLSS…AVVF), 140–160 (VLGT…HGPM), 168–188 (WIIG…SYLV), 200–220 (VVVT…VSLL), 233–253 (FDIT…YYVI), 266–286 (LSMF…IFLG), and 289–309 (LYLG…MVLW). In terms of domain architecture, EamA spans 29-154 (TLVKAATSKG…LSIIGALVVT (126 aa)).

This sequence belongs to the drug/metabolite transporter (DMT) superfamily. Plant drug/metabolite exporter (P-DME) (TC 2.A.7.4) family.

It localises to the membrane. In Arabidopsis thaliana (Mouse-ear cress), this protein is WAT1-related protein At5g40210.